The sequence spans 531 residues: UDP-glucuronosyltransferase 1A5 (531 aa).

Positions M1 to G25 are cleaved as a signal peptide. N-linked (GlcNAc...) asparagine glycans are attached at residues N116, N131, N139, N293, and N431. The helical transmembrane segment at V489–Y505 threads the bilayer.

Belongs to the UDP-glycosyltransferase family. In terms of assembly, homodimer. Homooligomer. Interacts with UGT1A1, UGT1A3, UGT1A4, UGT1A6, UGT1A7, UGT1A8, UGT1A9 and UGT1A10 to form heterodimers.

The protein resides in the endoplasmic reticulum membrane. The enzyme catalyses glucuronate acceptor + UDP-alpha-D-glucuronate = acceptor beta-D-glucuronoside + UDP + H(+). The catalysed reaction is zolasartan + UDP-alpha-D-glucuronate = zolarsartan-1-N-beta-D-glucuronide + UDP. UDP-glucuronosyltransferase (UGT) that catalyzes phase II biotransformation reactions in which lipophilic substrates are conjugated with glucuronic acid to increase the metabolite's water solubility, thereby facilitating excretion into either the urine or bile. Essential for the elimination and detoxification of drugs, xenobiotics and endogenous compounds. Involved in the glucuronidation of the AGTR1 angiotensin receptor antagonist zolarsatan, a drug which can inhibit the effect of angiotensin II. The chain is UDP-glucuronosyltransferase 1A5 from Rattus norvegicus (Rat).